Consider the following 404-residue polypeptide: Protein translocase subunit SecF (404 aa).

The next 6 helical transmembrane spans lie at 15-35 (KWYF…SMGA), 225-245 (LLAT…RFEL), 246-266 (IYGI…VGAF), 275-295 (LTVV…TIVV), 327-347 (ILTS…GGEV), and 355-375 (LVIG…PMLV).

The protein belongs to the SecD/SecF family. SecF subfamily. As to quaternary structure, forms a complex with SecD. Part of the essential Sec protein translocation apparatus which comprises SecA, SecYEG and auxiliary proteins SecDF. Other proteins may also be involved.

Its subcellular location is the cell inner membrane. Part of the Sec protein translocase complex. Interacts with the SecYEG preprotein conducting channel. SecDF uses the proton motive force (PMF) to complete protein translocation after the ATP-dependent function of SecA. In Koribacter versatilis (strain Ellin345), this protein is Protein translocase subunit SecF.